Consider the following 86-residue polypeptide: MVSVCRLLLVAALLLCLQAQLSFSQHWSHGWYPGGKREIDSYSSPEISGEIKLCEAGECSYLRPLRTNILKSILIDTLARKFQKRK.

The signal sequence occupies residues 1–24 (MVSVCRLLLVAALLLCLQAQLSFS). Residue Gln-25 is modified to Pyrrolidone carboxylic acid. Gly-34 carries the glycine amide modification.

Belongs to the GnRH family.

The protein resides in the secreted. Functionally, stimulates the secretion of gonadotropins. This Clarias gariepinus (North African catfish) protein is Progonadoliberin-2 (gnrh2).